Consider the following 191-residue polypeptide: Corrinoid adenosyltransferase (191 aa).

ATP contacts are provided by residues 10 to 18, lysine 28, 140 to 145, and asparagine 166; these read TRTGDNGTT and RRAERS.

This sequence belongs to the Cob(I)alamin adenosyltransferase family.

The protein localises to the cytoplasm. It catalyses the reaction 2 cob(II)yrinate a,c diamide + reduced [electron-transfer flavoprotein] + 2 ATP = 2 adenosylcob(III)yrinate a,c-diamide + 2 triphosphate + oxidized [electron-transfer flavoprotein] + 3 H(+). The catalysed reaction is 2 cob(II)alamin + reduced [electron-transfer flavoprotein] + 2 ATP = 2 adenosylcob(III)alamin + 2 triphosphate + oxidized [electron-transfer flavoprotein] + 3 H(+). The protein operates within cofactor biosynthesis; adenosylcobalamin biosynthesis; adenosylcobalamin from cob(II)yrinate a,c-diamide: step 2/7. The protein is Corrinoid adenosyltransferase of Mycobacterium leprae (strain TN).